The sequence spans 793 residues: Flavin carrier protein 1 (793 aa).

Positions 1-21 (MQVLVTLWCLICTCLVLPVAA) are cleaved as a signal peptide. At 22-163 (KKRTLTASSL…FFSNGKTVSQ (142 aa)) the chain is on the lumenal side. N-linked (GlcNAc...) asparagine glycosylation is present at N143. Residues 164-184 (IGVKWVTAVIAGIGLLTSAVL) traverse the membrane as a helical segment. The Cytoplasmic portion of the chain corresponds to 185–194 (STFGNSTAAS). A helical membrane pass occupies residues 195-215 (HISANTMSLFLYFQSVAVVAM). The Lumenal segment spans residues 216–223 (QHVDSVPP). A helical transmembrane segment spans residues 224–244 (IAAAWSENLAWSMGLIRITFM). Residues 245–249 (QKIFR) lie on the Cytoplasmic side of the membrane. A helical membrane pass occupies residues 250–272 (WYVEATGGSASLYLTATTMSVLT). Residues 273–317 (QRGLDYLKNTSVYKRAENVLYGNSNTLIFRGIKRMGYRMKIENTA) lie on the Lumenal side of the membrane. N-linked (GlcNAc...) asparagine glycosylation is present at N281. A helical membrane pass occupies residues 318 to 338 (IVCTGFTFFVLCGYFLAGFIM). Topologically, residues 339–372 (ACKYSIELCIRCGWMRSDRFYQFRKNWRSVLKGS) are cytoplasmic. A helical membrane pass occupies residues 373–393 (LLRYIYIGFTQLTILSFWEFT). Over 394–397 (ERDS) the chain is Lumenal. A helical transmembrane segment spans residues 398-418 (AGVIVIACLFIVLSCGLMAWA). At 419–461 (AYRTIFFASKSVEMYNNPAALLYGDEYVLNKYGFFYTMFNAKH) the chain is on the cytoplasmic side. A helical transmembrane segment spans residues 462–482 (YWWNALLTTYILVKALFVGFA). At 483–484 (QA) the chain is on the lumenal side. A helical transmembrane segment spans residues 485–505 (SGKTQALAIFIIDLAYFVAII). The Cytoplasmic portion of the chain corresponds to 506-516 (RYKPYLDRPTN). Residues 517 to 537 (IVNIFICTVTLVNSFLFMFFS) form a helical membrane-spanning segment. At 538-551 (NLFNQKYAVSAIMG) the chain is on the lumenal side. Residues 552-572 (WVFFIMNAAFSLLLLLMILAF) form a helical membrane-spanning segment. The Cytoplasmic segment spans residues 573–793 (TTIILFSKNP…KANILDPDYL (221 aa)). S610 is subject to Phosphoserine. T626 carries the post-translational modification Phosphothreonine. 2 disordered regions span residues 649 to 674 (YDDE…PTFS) and 689 to 731 (KLGS…QESE). A compositionally biased stretch (polar residues) spans 701–719 (ITQQEVSPDRASSSPNSKS). A phosphoserine mark is found at S771 and S774.

This sequence belongs to the transient receptor potential (TRP) ion channel family.

The protein localises to the endoplasmic reticulum membrane. May be responsible for the transport of FAD into the endoplasmic reticulum lumen, where it is required for oxidative protein folding. In Saccharomyces cerevisiae (strain ATCC 204508 / S288c) (Baker's yeast), this protein is Flavin carrier protein 1 (FLC1).